Here is a 309-residue protein sequence, read N- to C-terminus: Porphobilinogen deaminase (309 aa).

Residue Cys-241 is modified to S-(dipyrrolylmethanemethyl)cysteine.

Belongs to the HMBS family. Monomer. Dipyrromethane is required as a cofactor.

It catalyses the reaction 4 porphobilinogen + H2O = hydroxymethylbilane + 4 NH4(+). It functions in the pathway porphyrin-containing compound metabolism; protoporphyrin-IX biosynthesis; coproporphyrinogen-III from 5-aminolevulinate: step 2/4. Functionally, tetrapolymerization of the monopyrrole PBG into the hydroxymethylbilane pre-uroporphyrinogen in several discrete steps. This chain is Porphobilinogen deaminase, found in Desulforamulus reducens (strain ATCC BAA-1160 / DSM 100696 / MI-1) (Desulfotomaculum reducens).